We begin with the raw amino-acid sequence, 281 residues long: Bifunctional protein FolD (281 aa).

NADP(+) is bound by residues 165–167 (GRG), Thr192, and Val233.

The protein belongs to the tetrahydrofolate dehydrogenase/cyclohydrolase family. As to quaternary structure, homodimer.

It carries out the reaction (6R)-5,10-methylene-5,6,7,8-tetrahydrofolate + NADP(+) = (6R)-5,10-methenyltetrahydrofolate + NADPH. It catalyses the reaction (6R)-5,10-methenyltetrahydrofolate + H2O = (6R)-10-formyltetrahydrofolate + H(+). It participates in one-carbon metabolism; tetrahydrofolate interconversion. Functionally, catalyzes the oxidation of 5,10-methylenetetrahydrofolate to 5,10-methenyltetrahydrofolate and then the hydrolysis of 5,10-methenyltetrahydrofolate to 10-formyltetrahydrofolate. This Mycobacterium avium (strain 104) protein is Bifunctional protein FolD.